The chain runs to 193 residues: Outer membrane lipoprotein DolP (193 aa).

Positions 1–21 (MTLSPLKKLAILLGATIFLQG) are cleaved as a signal peptide. Cys-22 carries N-palmitoyl cysteine lipidation. Cys-22 is lipidated: S-diacylglycerol cysteine. 2 BON domains span residues 48 to 117 (DDET…TVSP) and 126 to 193 (KDSW…KYLD).

This sequence belongs to the lipoprotein DolP family.

The protein localises to the cell outer membrane. Plays an important role in maintaining outer membrane integrity. The polypeptide is Outer membrane lipoprotein DolP (Haemophilus influenzae (strain ATCC 51907 / DSM 11121 / KW20 / Rd)).